The chain runs to 269 residues: Putative phosphoenolpyruvate synthase regulatory protein (269 aa).

Position 149–156 (149–156) interacts with ADP; that stretch reads GVSRSGKT.

The protein belongs to the pyruvate, phosphate/water dikinase regulatory protein family. PSRP subfamily.

The catalysed reaction is [pyruvate, water dikinase] + ADP = [pyruvate, water dikinase]-phosphate + AMP + H(+). It carries out the reaction [pyruvate, water dikinase]-phosphate + phosphate + H(+) = [pyruvate, water dikinase] + diphosphate. In terms of biological role, bifunctional serine/threonine kinase and phosphorylase involved in the regulation of the phosphoenolpyruvate synthase (PEPS) by catalyzing its phosphorylation/dephosphorylation. In Pseudoalteromonas translucida (strain TAC 125), this protein is Putative phosphoenolpyruvate synthase regulatory protein.